We begin with the raw amino-acid sequence, 311 residues long: MTMDRPPAPPPPSSDPRDARRHDPEADATSEPDSSRGGMEPPAEPQLLLNGAAKEAGRPSPGPPAAAVPVIELVRRGGSLDIKSREAAGEAMQRAPGAEPCRAAEAACEARMVQLSPPALPLQPPGRAMLYNLGQPLGTIGSGFFGEPDSFSMYGSNRVKRRPSPYEMEITDGPHTKVVRRIFTNSRERWRQQNVNGAFAELRKLIPTHPPDKKLSKNEILRLAMKYINFLAKLLNDQEEEGNQRGKVNKDSGIVQEDLLQDMLSPNSSCGSSLDGAASPDSFTEEHDTLDSKHARNLHHAILPVEGSAQR.

Over residues 1 to 14 the composition is skewed to pro residues; that stretch reads MTMDRPPAPPPPSS. The disordered stretch occupies residues 1–67; it reads MTMDRPPAPP…RPSPGPPAAA (67 aa). Residues 15 to 25 are compositionally biased toward basic and acidic residues; sequence DPRDARRHDPE. One can recognise a bHLH domain in the interval 179 to 231; that stretch reads VRRIFTNSRERWRQQNVNGAFAELRKLIPTHPPDKKLSKNEILRLAMKYINFL. Residues 265-311 are disordered; the sequence is SPNSSCGSSLDGAASPDSFTEEHDTLDSKHARNLHHAILPVEGSAQR. The segment covering 284 to 294 has biased composition (basic and acidic residues); sequence TEEHDTLDSKH.

As to quaternary structure, efficient DNA binding requires dimerization with another bHLH protein. Forms heterodimers with TCF3. Post-translationally, phosphorylated on serine residues.

It localises to the nucleus. Implicated in the genesis of hemopoietic malignancies. It may play an important role in hemopoietic differentiation. This is T-cell acute lymphocytic leukemia protein 1 homolog (TAL1) from Gallus gallus (Chicken).